The sequence spans 143 residues: Small ribosomal subunit protein bS6 (143 aa).

The interval 100–143 is disordered; that stretch reads QSFIMKSKDDKGDKPERRRRDDDESGDVGVSNDSDNDGGNAEAA. The segment covering 105–121 has biased composition (basic and acidic residues); that stretch reads KSKDDKGDKPERRRRDD. A compositionally biased stretch (low complexity) spans 126–143; the sequence is DVGVSNDSDNDGGNAEAA.

It belongs to the bacterial ribosomal protein bS6 family.

In terms of biological role, binds together with bS18 to 16S ribosomal RNA. The sequence is that of Small ribosomal subunit protein bS6 from Xylella fastidiosa (strain M12).